We begin with the raw amino-acid sequence, 314 residues long: 2,3-dihydroxyphenylpropionate/2,3-dihydroxicinnamic acid 1,2-dioxygenase (314 aa).

His115 acts as the Proton donor in catalysis. Catalysis depends on His179, which acts as the Proton acceptor.

It belongs to the LigB/MhpB extradiol dioxygenase family. Homotetramer. The cofactor is Fe(2+).

The enzyme catalyses 3-(2,3-dihydroxyphenyl)propanoate + O2 = (2Z,4E)-2-hydroxy-6-oxonona-2,4-dienedioate + H(+). The catalysed reaction is (2E)-3-(2,3-dihydroxyphenyl)prop-2-enoate + O2 = (2Z,4E,7E)-2-hydroxy-6-oxonona-2,4,7-trienedioate + H(+). It participates in aromatic compound metabolism; 3-phenylpropanoate degradation. Catalyzes the non-heme iron(II)-dependent oxidative cleavage of 2,3-dihydroxyphenylpropionic acid and 2,3-dihydroxicinnamic acid into 2-hydroxy-6-ketononadienedioate and 2-hydroxy-6-ketononatrienedioate, respectively. This is 2,3-dihydroxyphenylpropionate/2,3-dihydroxicinnamic acid 1,2-dioxygenase from Escherichia coli O157:H7.